The primary structure comprises 48 residues: Palustrin-3b (48 aa).

Cysteines 43 and 48 form a disulfide.

In terms of tissue distribution, expressed by the skin glands.

It localises to the secreted. Its function is as follows. Antimicrobial activity against Gram-negative bacterium E.coli. This is Palustrin-3b from Lithobates palustris (Pickerel frog).